Consider the following 1358-residue polypeptide: Phosphoribosylformylglycinamidine synthase (1358 aa).

Threonine 2 is subject to N-acetylthreonine. Residues 339 to 363 (AVSPFPGAATGSGGEIRDEGATGRG) are disordered. ATP is bound by residues 345 to 356 (GAATGSGGEIRD), 424 to 426 (NGY), and alanine 719. Aspartate 720, glutamate 762, asparagine 766, and aspartate 930 together coordinate Mg(2+). Serine 932 lines the ATP pocket. A Glutamine amidotransferase type-1 domain is found at 1093 to 1358 (VAILREQGVN…LFRSARRWVG (266 aa)). Cysteine 1187 (nucleophile) is an active-site residue. Catalysis depends on residues histidine 1319 and glutamate 1321.

This sequence in the N-terminal section; belongs to the FGAMS family.

It localises to the cytoplasm. It catalyses the reaction N(2)-formyl-N(1)-(5-phospho-beta-D-ribosyl)glycinamide + L-glutamine + ATP + H2O = 2-formamido-N(1)-(5-O-phospho-beta-D-ribosyl)acetamidine + L-glutamate + ADP + phosphate + H(+). It functions in the pathway purine metabolism; IMP biosynthesis via de novo pathway; 5-amino-1-(5-phospho-D-ribosyl)imidazole from N(2)-formyl-N(1)-(5-phospho-D-ribosyl)glycinamide: step 1/2. Its function is as follows. Phosphoribosylformylglycinamidine synthase involved in the purines biosynthetic pathway. Catalyzes the ATP-dependent conversion of formylglycinamide ribonucleotide (FGAR) and glutamine to yield formylglycinamidine ribonucleotide (FGAM) and glutamate. The polypeptide is Phosphoribosylformylglycinamidine synthase (ADE6) (Saccharomyces cerevisiae (strain ATCC 204508 / S288c) (Baker's yeast)).